A 96-amino-acid polypeptide reads, in one-letter code: Guanine nucleotide-binding protein alpha-9 subunit (96 aa).

Residues 2–96 enclose the G-alpha domain; the sequence is YFHSTAIILF…ISASLKMVGV (95 aa). The interval 9–16 is G1 motif; that stretch reads ILFLNKID. GTP contacts are provided by residues 13–16 and Ala-69; that span reads NKID. Residues 67–72 are G2 motif; that stretch reads TSATDT.

The protein belongs to the G-alpha family. G proteins are composed of 3 units; alpha, beta and gamma. The alpha chain contains the guanine nucleotide binding site. As to expression, expressed in ASJ neurons.

Guanine nucleotide-binding proteins (G proteins) are involved as modulators or transducers in various transmembrane signaling systems. Plays a role in innate immunity and maintaining survival in response to metabolites of E.coli. This might be by regulating the expression and signaling of genes such as lys-8, ins-7 and daf-28. Has a role in lifespan to promote longevity. The chain is Guanine nucleotide-binding protein alpha-9 subunit from Caenorhabditis elegans.